The following is a 296-amino-acid chain: Solute carrier protein FPSE_08119 (296 aa).

Transmembrane regions (helical) follow at residues glycine 12–alanine 32, alanine 122–isoleucine 142, and alanine 219–valine 239. 3 Solcar repeats span residues leucine 16–glutamate 102, leucine 114–glutamine 205, and serine 213–serine 296.

It belongs to the mitochondrial carrier (TC 2.A.29) family.

It localises to the mitochondrion inner membrane. Solute carrier protein; part of the Fusarium detoxification of benzoxazolinone cluster involved in the degradation of benzoxazolinones produced by the host plant. Maize, wheat, and rye produce the 2 benzoxazinone phytoanticipins 2,4-dihy-droxy-7-methoxy-1,4-benzoxazin-3-one (DIMBOA) and 2,4-dihydroxy-1,4-benzoxazin-3-one (DIBOA) that, due to their inherent instability once released, spontaneously degrade to the more stable corresponding benzoxazolinones, 6-methoxy-2-benzoxazolinone (MBOA) and 2-benzoxazolinone (BOA), respectively. The chain is Solute carrier protein FPSE_08119 from Fusarium pseudograminearum (strain CS3096) (Wheat and barley crown-rot fungus).